A 458-amino-acid chain; its full sequence is L-hydantoinase (458 aa).

Positions 60, 62, 147, 183, 239, and 312 each coordinate Zn(2+). At lysine 147 the chain carries N6-carboxylysine.

In terms of assembly, homotetramer. Requires Zn(2+) as cofactor. Carboxylation allows a single lysine to coordinate two zinc ions.

Functionally, rather more predominant for the cleavage of aryl- than for alkyl-hydantoin derivatives. The stereoselectivity of this enzyme depends on the substrate used for bioconversion: strictly L-selective for the cleavage of D,L-5-indolylmethylhydantoin, but D-selective for the hydrolysis of D,L-methylthioethylhydantoin. The sequence is that of L-hydantoinase (lhyD) from Paenarthrobacter aurescens (Arthrobacter aurescens).